Here is a 98-residue protein sequence, read N- to C-terminus: Large ribosomal subunit protein uL23 (98 aa).

It belongs to the universal ribosomal protein uL23 family. In terms of assembly, part of the 50S ribosomal subunit. Contacts protein L29, and trigger factor when it is bound to the ribosome.

In terms of biological role, one of the early assembly proteins it binds 23S rRNA. One of the proteins that surrounds the polypeptide exit tunnel on the outside of the ribosome. Forms the main docking site for trigger factor binding to the ribosome. The sequence is that of Large ribosomal subunit protein uL23 from Gluconacetobacter diazotrophicus (strain ATCC 49037 / DSM 5601 / CCUG 37298 / CIP 103539 / LMG 7603 / PAl5).